The sequence spans 257 residues: Imidazole glycerol phosphate synthase subunit HisF (257 aa).

Residues aspartate 11 and aspartate 130 contribute to the active site.

Belongs to the HisA/HisF family. In terms of assembly, heterodimer of HisH and HisF.

It localises to the cytoplasm. The enzyme catalyses 5-[(5-phospho-1-deoxy-D-ribulos-1-ylimino)methylamino]-1-(5-phospho-beta-D-ribosyl)imidazole-4-carboxamide + L-glutamine = D-erythro-1-(imidazol-4-yl)glycerol 3-phosphate + 5-amino-1-(5-phospho-beta-D-ribosyl)imidazole-4-carboxamide + L-glutamate + H(+). It participates in amino-acid biosynthesis; L-histidine biosynthesis; L-histidine from 5-phospho-alpha-D-ribose 1-diphosphate: step 5/9. Functionally, IGPS catalyzes the conversion of PRFAR and glutamine to IGP, AICAR and glutamate. The HisF subunit catalyzes the cyclization activity that produces IGP and AICAR from PRFAR using the ammonia provided by the HisH subunit. This Xylella fastidiosa (strain M23) protein is Imidazole glycerol phosphate synthase subunit HisF.